We begin with the raw amino-acid sequence, 235 residues long: Small ribosomal subunit protein eS4 (235 aa).

An S4 RNA-binding domain is found at 38–99 (VTLLSIIRDY…GESYRVVYND (62 aa)).

Belongs to the eukaryotic ribosomal protein eS4 family.

This is Small ribosomal subunit protein eS4 (rps4e) from Thermoplasma acidophilum (strain ATCC 25905 / DSM 1728 / JCM 9062 / NBRC 15155 / AMRC-C165).